Here is a 463-residue protein sequence, read N- to C-terminus: Fumarate hydratase class II (463 aa).

Substrate contacts are provided by residues 98–100 (SGT), 129–132 (HPND), 139–141 (SSN), and T187. H188 functions as the Proton donor/acceptor in the catalytic mechanism. The active site involves S318. Substrate-binding positions include S319 and 324-326 (KVN).

Belongs to the class-II fumarase/aspartase family. Fumarase subfamily. In terms of assembly, homotetramer.

Its subcellular location is the cytoplasm. The catalysed reaction is (S)-malate = fumarate + H2O. It participates in carbohydrate metabolism; tricarboxylic acid cycle; (S)-malate from fumarate: step 1/1. Functionally, involved in the TCA cycle. Catalyzes the stereospecific interconversion of fumarate to L-malate. This chain is Fumarate hydratase class II, found in Rickettsia bellii (strain RML369-C).